The sequence spans 113 residues: Ribulose bisphosphate carboxylase small subunit (113 aa).

The protein belongs to the RuBisCO small chain family. Heterohexadecamer of 8 large and 8 small subunits. Forms a CsoS2-CsoS1-RuBisCO complex.

It is found in the carboxysome. Functionally, ruBisCO catalyzes two reactions: the carboxylation of D-ribulose 1,5-bisphosphate, the primary event in carbon dioxide fixation, as well as the oxidative fragmentation of the pentose substrate in the photorespiration process. Both reactions occur simultaneously and in competition at the same active site. Although the small subunit is not catalytic it is essential for maximal activity. The sequence is that of Ribulose bisphosphate carboxylase small subunit from Prochlorococcus marinus (strain MIT 9313).